Consider the following 398-residue polypeptide: Probable aminomethyltransferase (398 aa).

This sequence belongs to the GcvT family. As to quaternary structure, the glycine cleavage system is composed of four proteins: P, T, L and H.

It catalyses the reaction N(6)-[(R)-S(8)-aminomethyldihydrolipoyl]-L-lysyl-[protein] + (6S)-5,6,7,8-tetrahydrofolate = N(6)-[(R)-dihydrolipoyl]-L-lysyl-[protein] + (6R)-5,10-methylene-5,6,7,8-tetrahydrofolate + NH4(+). In terms of biological role, the glycine cleavage system catalyzes the degradation of glycine. The sequence is that of Probable aminomethyltransferase from Pyrococcus abyssi (strain GE5 / Orsay).